A 129-amino-acid chain; its full sequence is Lysozyme C (129 aa).

The C-type lysozyme domain occupies 1-129; the sequence is KVYGRCELAA…VNAWTRGCRL (129 aa). 4 cysteine pairs are disulfide-bonded: C6-C127, C30-C115, C64-C80, and C76-C94. Catalysis depends on residues E35 and D52.

It belongs to the glycosyl hydrolase 22 family. As to quaternary structure, monomer.

The protein localises to the secreted. The enzyme catalyses Hydrolysis of (1-&gt;4)-beta-linkages between N-acetylmuramic acid and N-acetyl-D-glucosamine residues in a peptidoglycan and between N-acetyl-D-glucosamine residues in chitodextrins.. Its function is as follows. Lysozymes have primarily a bacteriolytic function; those in tissues and body fluids are associated with the monocyte-macrophage system and enhance the activity of immunoagents. The chain is Lysozyme C (LYZ) from Syrmaticus soemmerringii (Copper pheasant).